The sequence spans 440 residues: 3-phosphoshikimate 1-carboxyvinyltransferase (440 aa).

3-phosphoshikimate-binding residues include K26, S27, and R31. A phosphoenolpyruvate-binding site is contributed by K26. 2 residues coordinate phosphoenolpyruvate: G100 and R134. 3-phosphoshikimate is bound by residues S180, S181, Q182, S208, D323, N346, and K350. Q182 serves as a coordination point for phosphoenolpyruvate. The active-site Proton acceptor is D323. Residues R354, R398, and K423 each contribute to the phosphoenolpyruvate site.

Belongs to the EPSP synthase family. As to quaternary structure, monomer.

The protein localises to the cytoplasm. The catalysed reaction is 3-phosphoshikimate + phosphoenolpyruvate = 5-O-(1-carboxyvinyl)-3-phosphoshikimate + phosphate. The protein operates within metabolic intermediate biosynthesis; chorismate biosynthesis; chorismate from D-erythrose 4-phosphate and phosphoenolpyruvate: step 6/7. Functionally, catalyzes the transfer of the enolpyruvyl moiety of phosphoenolpyruvate (PEP) to the 5-hydroxyl of shikimate-3-phosphate (S3P) to produce enolpyruvyl shikimate-3-phosphate and inorganic phosphate. This is 3-phosphoshikimate 1-carboxyvinyltransferase from Pasteurella multocida (strain Pm70).